Reading from the N-terminus, the 728-residue chain is Lanosterol synthase (728 aa).

A PFTB 1 repeat occupies 117 to 159 (RVEMIRYIVNTAHPVDGGWGLHSVDKSTCFGTTMNYVCLRLLG). Asp-450 acts as the Proton donor in catalysis. PFTB repeat units lie at residues 561-602 (ISSA…HTVG) and 611-657 (VKKG…ALIG).

This sequence belongs to the terpene cyclase/mutase family.

It localises to the lipid droplet. It is found in the endoplasmic reticulum membrane. The catalysed reaction is (S)-2,3-epoxysqualene = lanosterol. It participates in terpene metabolism; lanosterol biosynthesis; lanosterol from farnesyl diphosphate: step 3/3. In terms of biological role, lanosterol synthase; part of the third module of ergosterol biosynthesis pathway that includes the late steps of the pathway. ERG7 catalyzes the cyclization of (S)-2,3 oxidosqualene to lanosterol, a reaction that forms the sterol core. The third module or late pathway involves the ergosterol synthesis itself through consecutive reactions that mainly occur in the endoplasmic reticulum (ER) membrane. Firstly, the squalene synthase ERG9 catalyzes the condensation of 2 farnesyl pyrophosphate moieties to form squalene, which is the precursor of all steroids. Squalene synthase is crucial for balancing the incorporation of farnesyl diphosphate (FPP) into sterol and nonsterol isoprene synthesis. Secondly, the squalene epoxidase ERG1 catalyzes the stereospecific oxidation of squalene to (S)-2,3-epoxysqualene, which is considered to be a rate-limiting enzyme in steroid biosynthesis. Then, the lanosterol synthase ERG7 catalyzes the cyclization of (S)-2,3 oxidosqualene to lanosterol, a reaction that forms the sterol core. In the next steps, lanosterol is transformed to zymosterol through a complex process involving various demethylation, reduction and desaturation reactions. The lanosterol 14-alpha-demethylase ERG11 (also known as CYP51) catalyzes C14-demethylation of lanosterol to produce 4,4'-dimethyl cholesta-8,14,24-triene-3-beta-ol, which is critical for ergosterol biosynthesis. The C-14 reductase ERG24 reduces the C14=C15 double bond of 4,4-dimethyl-cholesta-8,14,24-trienol to produce 4,4-dimethyl-cholesta-8,24-dienol. 4,4-dimethyl-cholesta-8,24-dienol is substrate of the C-4 demethylation complex ERG25-ERG26-ERG27 in which ERG25 catalyzes the three-step monooxygenation required for the demethylation of 4,4-dimethyl and 4alpha-methylsterols, ERG26 catalyzes the oxidative decarboxylation that results in a reduction of the 3-beta-hydroxy group at the C-3 carbon to an oxo group, and ERG27 is responsible for the reduction of the keto group on the C-3. ERG28 has a role as a scaffold to help anchor ERG25, ERG26 and ERG27 to the endoplasmic reticulum and ERG29 regulates the activity of the iron-containing C4-methylsterol oxidase ERG25. Then, the sterol 24-C-methyltransferase ERG6 catalyzes the methyl transfer from S-adenosyl-methionine to the C-24 of zymosterol to form fecosterol. The C-8 sterol isomerase ERG2 catalyzes the reaction which results in unsaturation at C-7 in the B ring of sterols and thus converts fecosterol to episterol. The sterol-C5-desaturase ERG3 then catalyzes the introduction of a C-5 double bond in the B ring to produce 5-dehydroepisterol. The C-22 sterol desaturase ERG5 further converts 5-dehydroepisterol into ergosta-5,7,22,24(28)-tetraen-3beta-ol by forming the C-22(23) double bond in the sterol side chain. Finally, ergosta-5,7,22,24(28)-tetraen-3beta-ol is substrate of the C-24(28) sterol reductase ERG4 to produce ergosterol. The protein is Lanosterol synthase of Candida albicans (strain SC5314 / ATCC MYA-2876) (Yeast).